The sequence spans 364 residues: Spermidine/putrescine import ATP-binding protein PotA (364 aa).

Residues 5-235 (LSLKSVSKSY…PVNRFVADFI (231 aa)) form the ABC transporter domain. Residue 37 to 44 (GPSGCGKT) participates in ATP binding.

Belongs to the ABC transporter superfamily. Spermidine/putrescine importer (TC 3.A.1.11.1) family. The complex is composed of two ATP-binding proteins (PotA), two transmembrane proteins (PotB and PotC) and a solute-binding protein (PotD).

It localises to the cell membrane. It catalyses the reaction ATP + H2O + polyamine-[polyamine-binding protein]Side 1 = ADP + phosphate + polyamineSide 2 + [polyamine-binding protein]Side 1.. Its function is as follows. Part of the ABC transporter complex PotABCD involved in spermidine/putrescine import. Responsible for energy coupling to the transport system. This chain is Spermidine/putrescine import ATP-binding protein PotA, found in Staphylococcus aureus (strain USA300).